The primary structure comprises 185 residues: MPIQNSPYNAFATLLSSSGHPVSPAELHGLLLGRSCAGAGFEVDGWLVDAAELLEGEPQDNVRSALIGLQEMVKGELTSDDMTVVLLLPSDDAPLAERAAALGQWCQGFLAGFGLNSRDSSALSVEATEVLQDLAAIAQVQDALEESDDGESDYMEVMEYLRVAPLLLFTETNKTVAPAAKPSLH.

The protein belongs to the UPF0149 family.

In Pseudomonas fluorescens (strain ATCC BAA-477 / NRRL B-23932 / Pf-5), this protein is UPF0149 protein PFL_5969.